The primary structure comprises 184 residues: Cysteine proteinase inhibitor 3 (184 aa).

The first 35 residues, 1–35 (MLRRRGFCCCSGAPAAAAAALLLLAVAAAAPRAAG), serve as a signal peptide directing secretion. In terms of domain architecture, Cystatin spans 48–134 (GMLAAIRREQ…KAVVEFRHVG (87 aa)). The Secondary area of contact motif lies at 90–94 (QVVTG). The disordered stretch occupies residues 138–165 (SQSATAADDNAGQDTADPTVASRNDLHN).

The protein belongs to the cystatin family. Phytocystatin subfamily.

The protein resides in the secreted. Specific inhibitor of cysteine proteinases. Probably involved in the regulation of endogenous processes and in defense against pests and pathogens. This Oryza sativa subsp. japonica (Rice) protein is Cysteine proteinase inhibitor 3.